The chain runs to 401 residues: Leucine aminopeptidase 1 (401 aa).

The first 18 residues, 1 to 18 (MKVAKASLLTILAHSVSA), serve as a signal peptide directing secretion. Positions 19–87 (RFLAEDEINR…GATRLRTKTK (69 aa)) are excised as a propeptide. The N-linked (GlcNAc...) asparagine glycan is linked to Asn-179. The Zn(2+) site is built by His-187, Asp-206, Glu-245, and Asp-272. Cys-321 and Cys-325 are disulfide-bonded. His-354 is a binding site for Zn(2+).

This sequence belongs to the peptidase M28 family. M28E subfamily. In terms of assembly, monomer. Zn(2+) is required as a cofactor.

Its subcellular location is the secreted. Functionally, extracellular aminopeptidase that allows assimilation of proteinaceous substrates. The sequence is that of Leucine aminopeptidase 1 (LAP1) from Colletotrichum graminicola (strain M1.001 / M2 / FGSC 10212) (Maize anthracnose fungus).